Reading from the N-terminus, the 154-residue chain is UPF0178 protein GDI0551/Gdia_1457 (154 aa).

The protein belongs to the UPF0178 family.

This chain is UPF0178 protein GDI0551/Gdia_1457, found in Gluconacetobacter diazotrophicus (strain ATCC 49037 / DSM 5601 / CCUG 37298 / CIP 103539 / LMG 7603 / PAl5).